The sequence spans 789 residues: Potassium transporter 4 (789 aa).

Residues 1 to 32 (MAPAESGVSPRRNPSQLSWMNLSSNLILAYQS) are Cytoplasmic-facing. S9 carries the phosphoserine modification. A helical membrane pass occupies residues 33–53 (FGVVYGDLSTSPLYVFPSTFI). Residues 54–68 (GKLHKHHNEDAVFGA) lie on the Extracellular side of the membrane. A helical transmembrane segment spans residues 69–89 (FSLIFWTLTLIPLLKYLLVLL). Residues 90–154 (SADDNGEGGT…FLEKHKRLRT (65 aa)) lie on the Cytoplasmic side of the membrane. Residues 155–175 (ALLLVVLFGAAMVIGDGVLTP) form a helical membrane-spanning segment. Residues 176 to 195 (ALSVLSSLSGLQATEKNVTD) are Extracellular-facing. A helical transmembrane segment spans residues 196–216 (GELLVLACVILVGLFALQHCG). The Cytoplasmic portion of the chain corresponds to 217 to 219 (THR). A helical membrane pass occupies residues 220 to 240 (VAFMFAPIVIIWLISIFFIGL). Over 241–270 (YNIIRWNPKIIHAVSPLYIIKFFRVTGQDG) the chain is Extracellular. The helical transmembrane segment at 271 to 291 (WISLGGVLLSVTGTEAMFANL) threads the bilayer. Residues 292–300 (GHFTSVSIR) are Cytoplasmic-facing. The chain crosses the membrane as a helical span at residues 301–321 (VAFAVVVYPCLVVQYMGQAAF). Over 322–340 (LSKNLGSIPNSFYDSVPDP) the chain is Extracellular. The helical transmembrane segment at 341 to 361 (VFWPVFVIATLAAIVGSQAVI) threads the bilayer. At 362 to 392 (TTTFSIIKQCHALGCFPRIKVVHTSKHIYGQ) the chain is on the cytoplasmic side. The chain crosses the membrane as a helical span at residues 393–413 (IYIPEINWILMILTLAMAIGF). Residues 414–424 (RDTTLIGNAYG) are Extracellular-facing. The helical transmembrane segment at 425-445 (IACMVVMFITTFFMALVIVVV) threads the bilayer. Over 446–450 (WQKSC) the chain is Cytoplasmic. Residues 451–471 (FLAALFLGTLWIIEGVYLSAA) traverse the membrane as a helical segment. Residues 472–478 (LMKVTEG) are Extracellular-facing. Residues 479 to 499 (GWVPFVLTFIFMIAMYVWHYG) form a helical membrane-spanning segment. Residues 500-789 (TRRKYSFDLH…LIEVGMIYYV (290 aa)) are Cytoplasmic-facing.

This sequence belongs to the HAK/KUP transporter (TC 2.A.72.3) family. Detected at very low levels in roots, stems, leaves and flowers of mature plants and strongly expressed in the roots of potassium-starved plants.

The protein resides in the cell membrane. Its function is as follows. High-affinity potassium transporter. This chain is Potassium transporter 4 (POT4), found in Arabidopsis thaliana (Mouse-ear cress).